The primary structure comprises 528 residues: MNKKWLNIPALIALLAAIAFGSVAPAEAAPATSVSNKQNFSTDVIYQIVTDRFVDGNTANNPAGSAYDATCSTNLKLYCGGDWQGIMNKINDGYFTGMGITALWISQPVENIYSVINYSGVNNTAYHGYWARDFKKTNPAFGSMTDFANLISAAHSRNIKVVIDFAPNHTSPAMETNASFGENGKLYDNGTLLGGYTGDTNGYFHHNGGTDFSTLKNGIYKNLYDLADLNHNNSTIDTYFKNAIRLWLDMGIDGIRVDAVKHMPFGWQKNWMSSIYSYKPVFTFGEWFLGTNETDANNTYFANESGMSLLDFRFSQKVRQVFRDGSDTMYGLDSMLSSTAADYYSVNDQVTFLDNHDMDRFQVSGANGRKLEQALALTLTSRGVPAIYYGTEQYMTGNGDPNNRAKMSSFSTSTTAYNVISKLAPLRKSNPAIAYGTTQQRWINNDVYIYERKFGNNVAVVAINKNLTSSYSIAGLNTSLPSGTYTDVLANSLSGNSITVGSSGAVNTFTLQAGGEASGLTRRRQRLR.

Positions 1–28 (MNKKWLNIPALIALLAAIAFGSVAPAEA) are cleaved as a signal peptide. The Ca(2+) site is built by asparagine 168 and aspartate 228. Aspartate 258 functions as the Nucleophile in the catalytic mechanism. Residue histidine 262 participates in Ca(2+) binding. Glutamate 286 (proton donor) is an active-site residue.

Belongs to the glycosyl hydrolase 13 family. Monomer. Ca(2+) is required as a cofactor.

It catalyses the reaction Endohydrolysis of (1-&gt;4)-alpha-D-glucosidic linkages in polysaccharides containing three or more (1-&gt;4)-alpha-linked D-glucose units.. The polypeptide is Alpha-amylase (Niallia circulans (Bacillus circulans)).